The chain runs to 824 residues: Tuftelin-interacting protein 11 (824 aa).

Residues 1–135 (MSMSHLYGKD…RTFAGGIKSN (135 aa)) form a disordered region. Residues 11–25 (EDSDGVEMENFEITD) show a composition bias toward acidic residues. Composition is skewed to basic and acidic residues over residues 41–61 (QTKE…DERP) and 85–114 (PAAE…EAKK). The segment covering 122–135 (KPSQRTFAGGIKSN) has biased composition (polar residues). The 47-residue stretch at 145–191 (TKGIGQKLLQKMGYMPGRGLGKNAQGIIAPIEAKQRRGKGAVGAYGS) folds into the G-patch domain.

This sequence belongs to the TFP11/STIP family. Identified in the spliceosome C complex.

It is found in the nucleus. In terms of biological role, involved in pre-mRNA splicing, specifically in spliceosome disassembly during late-stage splicing events. In Xenopus laevis (African clawed frog), this protein is Tuftelin-interacting protein 11 (tfip11).